A 173-amino-acid chain; its full sequence is Large ribosomal subunit protein uL29c (173 aa).

Residues 1–60 (MLSLSIATPGTAAIFRRGTASATSTSSSFHGVRIQHQVSARVPAAATISSSSPKPSVVMM) constitute a chloroplast transit peptide. The tract at residues 143 to 173 (KKSIVPRPPPSLKKLQEEEAAEEAAEAAKSA) is disordered. The residue at position 172 (Ser172) is a Phosphoserine.

Belongs to the universal ribosomal protein uL29 family. Part of the 50S ribosomal subunit.

The protein resides in the plastid. It is found in the chloroplast. The polypeptide is Large ribosomal subunit protein uL29c (RPL29) (Arabidopsis thaliana (Mouse-ear cress)).